A 185-amino-acid polypeptide reads, in one-letter code: Elongation factor P (185 aa).

It belongs to the elongation factor P family.

Its subcellular location is the cytoplasm. Its pathway is protein biosynthesis; polypeptide chain elongation. Its function is as follows. Involved in peptide bond synthesis. Stimulates efficient translation and peptide-bond synthesis on native or reconstituted 70S ribosomes in vitro. Probably functions indirectly by altering the affinity of the ribosome for aminoacyl-tRNA, thus increasing their reactivity as acceptors for peptidyl transferase. The protein is Elongation factor P of Streptococcus pyogenes serotype M4 (strain MGAS10750).